A 418-amino-acid polypeptide reads, in one-letter code: UDP-N-acetylglucosamine 1-carboxyvinyltransferase (418 aa).

23–24 (KN) contacts phosphoenolpyruvate. R92 provides a ligand contact to UDP-N-acetyl-alpha-D-glucosamine. The active-site Proton donor is C116. C116 is modified (2-(S-cysteinyl)pyruvic acid O-phosphothioketal). UDP-N-acetyl-alpha-D-glucosamine-binding positions include 121 to 125 (RPVDL), 161 to 164 (KVSV), D306, and I328.

The protein belongs to the EPSP synthase family. MurA subfamily.

Its subcellular location is the cytoplasm. It catalyses the reaction phosphoenolpyruvate + UDP-N-acetyl-alpha-D-glucosamine = UDP-N-acetyl-3-O-(1-carboxyvinyl)-alpha-D-glucosamine + phosphate. It participates in cell wall biogenesis; peptidoglycan biosynthesis. In terms of biological role, cell wall formation. Adds enolpyruvyl to UDP-N-acetylglucosamine. This chain is UDP-N-acetylglucosamine 1-carboxyvinyltransferase, found in Vibrio parahaemolyticus serotype O3:K6 (strain RIMD 2210633).